A 436-amino-acid polypeptide reads, in one-letter code: UPF0597 protein YhaM (436 aa).

This sequence belongs to the UPF0597 family.

This chain is UPF0597 protein YhaM, found in Salmonella typhi.